A 2300-amino-acid chain; its full sequence is Protein hobbit (2300 aa).

The signal sequence occupies residues 1–21 (MMLQLLLFCLALFIFVYWVLP). Residues 23 to 117 (GISWYLVKRF…LRRTQTLAGK (95 aa)) are transmembrane domain. Disordered regions lie at residues 269–290 (TSTGQPSRRSTQGLAPSKRSYD) and 2111–2148 (VSDELDDNASTSSASTTNLQAKSSTSSSTKRSGKGKKG). Over residues 270–282 (STGQPSRRSTQGL) the composition is skewed to polar residues. A required for endoplasmic reticulum-cell membrane contact sites location and binding to phosphatidylinositols region spans residues 1750-2300 (VVSETVGAFL…ASSGKRSGND (551 aa)). Low complexity predominate over residues 2119–2140 (ASTSSASTTNLQAKSSTSSSTK).

It is found in the cell membrane. Its subcellular location is the endoplasmic reticulum membrane. The protein resides in the mitochondrion membrane. In terms of biological role, tube-forming lipid transport protein which binds to phosphatidylinositols and affects phosphatidylinositol-4,5-bisphosphate (PtdIns-4,5-P2) distribution. This is Protein hobbit from Drosophila melanogaster (Fruit fly).